The primary structure comprises 360 residues: DNA replication and repair protein RecF (360 aa).

33-40 serves as a coordination point for ATP; sequence GENGSGKT.

The protein belongs to the RecF family.

Its subcellular location is the cytoplasm. Its function is as follows. The RecF protein is involved in DNA metabolism; it is required for DNA replication and normal SOS inducibility. RecF binds preferentially to single-stranded, linear DNA. It also seems to bind ATP. The protein is DNA replication and repair protein RecF of Rickettsia conorii (strain ATCC VR-613 / Malish 7).